We begin with the raw amino-acid sequence, 131 residues long: MIYGIGTDIIHIPRIEQLINKYSTKFINRILGKNEITIYQSLSIKQQTNFVAKRFAGKESVAKAIGTGITSSLLLPDIEILNNNLGKPIVYIPNAAKILLNNKKLTEYKIDISLSDDHPLAIAFTVISAST.

Residues D8 and E59 each contribute to the Mg(2+) site.

This sequence belongs to the P-Pant transferase superfamily. AcpS family. The cofactor is Mg(2+).

The protein resides in the cytoplasm. The catalysed reaction is apo-[ACP] + CoA = holo-[ACP] + adenosine 3',5'-bisphosphate + H(+). Transfers the 4'-phosphopantetheine moiety from coenzyme A to a Ser of acyl-carrier-protein. The polypeptide is Holo-[acyl-carrier-protein] synthase (Orientia tsutsugamushi (strain Boryong) (Rickettsia tsutsugamushi)).